Consider the following 600-residue polypeptide: Jacalin-related lectin 18 (600 aa).

4 Jacalin-type lectin domains span residues 12–158 (TQRL…YFTC), 161–303 (PTRM…YFTT), 304–447 (SPFI…YFRL), and 454–597 (GEKV…HVLP).

Belongs to the jacalin lectin family.

This chain is Jacalin-related lectin 18 (JAL18), found in Arabidopsis thaliana (Mouse-ear cress).